We begin with the raw amino-acid sequence, 556 residues long: Urocanate hydratase (556 aa).

NAD(+) is bound by residues 52 to 53 (GG), glutamine 130, 176 to 178 (GMG), glutamate 196, arginine 201, 242 to 243 (NA), 263 to 267 (QTSAH), 273 to 274 (YL), and tyrosine 322. Cysteine 410 is a catalytic residue. An NAD(+)-binding site is contributed by glycine 492.

The protein belongs to the urocanase family. Requires NAD(+) as cofactor.

The protein localises to the cytoplasm. The catalysed reaction is 4-imidazolone-5-propanoate = trans-urocanate + H2O. It functions in the pathway amino-acid degradation; L-histidine degradation into L-glutamate; N-formimidoyl-L-glutamate from L-histidine: step 2/3. Its function is as follows. Catalyzes the conversion of urocanate to 4-imidazolone-5-propionate. The protein is Urocanate hydratase of Shewanella frigidimarina (strain NCIMB 400).